The sequence spans 174 residues: Repair DNA polymerase X (174 aa).

The segment at 42-51 (REEKMLNDVD) is involved in ssDNA binding. Mg(2+) contacts are provided by D49 and D51. A disulfide bridge connects residues C81 and C86. D100 contacts Mg(2+).

It belongs to the DNA polymerase type-X family. Requires Mg(2+) as cofactor.

It localises to the virion. The enzyme catalyses DNA(n) + a 2'-deoxyribonucleoside 5'-triphosphate = DNA(n+1) + diphosphate. In terms of biological role, error-prone polymerase lacking a proofreading 3'-5' exonuclease which catalyzes the gap-filling reaction during the DNA repair process. Specifically binds intermediates in the single-nucleotide base-excision repair process. Also catalyzes DNA polymerization with low nucleotide-insertion fidelity. Probably acts as a strategic DNA mutase, which gives rise to a rapid emergence of variants. Generates mismatched G-G pairs, in that case, the polymerase first binds the deoxynucleotide followed by mismatch formation. Together with the viral DNA ligase, fills the single nucleotide gaps generated by the AP endonuclease. Binds DNA with high affinity via the helix alphaE. The sequence is that of Repair DNA polymerase X from Ornithodoros (relapsing fever ticks).